The primary structure comprises 625 residues: Probable potassium transport system protein Kup (625 aa).

12 helical membrane passes run 13-33, 53-73, 103-123, 141-161, 172-192, 206-226, 250-270, 282-302, 340-360, 369-389, 400-420, and 422-442; these read TALA…LYAL, ILSI…VAIV, IYMI…GIIT, VFDP…FLVQ, FGPI…HSVI, AIQF…AVVL, WFFV…ALLL, LLVP…ATVI, IYVP…ILIF, AYGL…AVFI, VLIL…ATSL, and ILSG…ILMT.

The protein belongs to the HAK/KUP transporter (TC 2.A.72) family.

It is found in the cell inner membrane. It catalyses the reaction K(+)(in) + H(+)(in) = K(+)(out) + H(+)(out). Functionally, transport of potassium into the cell. Likely operates as a K(+):H(+) symporter. The polypeptide is Probable potassium transport system protein Kup (Acinetobacter baumannii (strain SDF)).